Here is a 211-residue protein sequence, read N- to C-terminus: Mitotic spindle assembly checkpoint protein MAD2B (211 aa).

Residues 13–203 (QVVADVLSEF…SDILKMQLYV (191 aa)) form the HORMA domain. The tract at residues 21 to 155 (EFLEVAVHLI…FTVLVHTREA (135 aa)) is mediates interaction with REV1 and REV3L and homodimerization.

Homooligomer. Heterodimer with REV3L. This dimer forms the minimal DNA polymerase zeta complex (Pol-zeta2), with REV3L bearing DNA polymerase catalytic activity, although its activity is very low in this context. Component of the tetrameric Pol-zeta complex (Pol-zeta4), which consists of REV3L, MAD2L2, POLD2 and POLD3; Pol-zeta4 is the fully active form of DNA polymerase zeta. Component of the shieldin complex, consisting of SHLD1, SHLD2, SHLD3 and MAD2L2/REV7. Within the complex, SHLD2 forms a scaffold which interacts with a SHLD3-MAD2L2 subcomplex via its N-terminus, and with SHLD1 via its C-terminus. Interacts with REV1. Interacts with ADAM9. Interacts with CHAMP1. Interacts with FZR1 (in complex with the anaphase promoting complex APC). May interact with CDC20. Interacts with RAN. Interacts with ELK1; the interaction is direct and recruits MAD2L2 to ELK1-specific promoters. May interact with the JNK kinases MAPK8 and/or MAPK9 to stimulate ELK1 phosphorylation and transcriptional activity upon DNA damage. Interacts with TCF7L2; prevents its binding to promoters and negatively modulates its transcriptional activity. Interacts with YY1AP1. Interacts with PRCC; the interaction is direct. Interacts with POGZ. Interacts with ASTE1.

Its subcellular location is the nucleus. It localises to the cytoplasm. The protein resides in the cytoskeleton. It is found in the spindle. Adapter protein able to interact with different proteins and involved in different biological processes. Mediates the interaction between the error-prone DNA polymerase zeta catalytic subunit REV3L and the inserter polymerase REV1, thereby mediating the second polymerase switching in translesion DNA synthesis. Translesion DNA synthesis releases the replication blockade of replicative polymerases, stalled in presence of DNA lesions. Component of the shieldin complex, which plays an important role in repair of DNA double-stranded breaks (DSBs). During G1 and S phase of the cell cycle, the complex functions downstream of TP53BP1 to promote non-homologous end joining (NHEJ) and suppress DNA end resection. Mediates various NHEJ-dependent processes including immunoglobulin class-switch recombination, and fusion of unprotected telomeres. May also regulate another aspect of cellular response to DNA damage through regulation of the JNK-mediated phosphorylation and activation of the transcriptional activator ELK1. Inhibits the FZR1- and probably CDC20-mediated activation of the anaphase promoting complex APC thereby regulating progression through the cell cycle. Regulates TCF7L2-mediated gene transcription and may play a role in epithelial-mesenchymal transdifferentiation. The polypeptide is Mitotic spindle assembly checkpoint protein MAD2B (Mad2l2) (Rattus norvegicus (Rat)).